Reading from the N-terminus, the 312-residue chain is Serine/threonine-protein phosphatase CPPED1 (312 aa).

Ser2 bears the Phosphoserine mark. A catalytic region spans residues 47 to 250 (KAWSTGNCDA…AVFSGHYHRN (204 aa)). The a divalent metal cation site is built by Asp90, Asn127, and His246. Ser293 is modified (phosphoserine).

This sequence belongs to the metallophosphoesterase superfamily. CPPED1 family. A divalent metal cation is required as a cofactor.

It localises to the cytoplasm. The enzyme catalyses O-phospho-L-seryl-[protein] + H2O = L-seryl-[protein] + phosphate. The catalysed reaction is O-phospho-L-threonyl-[protein] + H2O = L-threonyl-[protein] + phosphate. Functionally, protein phosphatase that dephosphorylates AKT family kinase specifically at 'Ser-473', blocking cell cycle progression and promoting cell apoptosis. May play an inhibitory role in glucose uptake by adipocytes. The chain is Serine/threonine-protein phosphatase CPPED1 (Cpped1) from Mus musculus (Mouse).